Consider the following 534-residue polypeptide: Serine/threonine-protein kinase 35 (534 aa).

A disordered region spans residues 32-176; it reads VESHGSLGAQ…AAAARAMDPV (145 aa). Low complexity-rich tracts occupy residues 39 to 65 and 166 to 176; these read GAQA…TSRA and PAAAARAMDPV. A Protein kinase domain is found at 202 to 530; the sequence is YSLLAEIGRG…FELETRMDQV (329 aa). ATP-binding positions include 208–216 and Lys-231; that span reads IGRGSYGVV. Residue Asp-360 is the Proton acceptor of the active site.

This sequence belongs to the protein kinase superfamily. Ser/Thr protein kinase family. In terms of assembly, interacts with PDLIM1/CLP-36. In terms of processing, autophosphorylated. Expressed in testis.

It localises to the nucleus. It is found in the nucleolus. The protein localises to the cytoplasm. It carries out the reaction L-seryl-[protein] + ATP = O-phospho-L-seryl-[protein] + ADP + H(+). It catalyses the reaction L-threonyl-[protein] + ATP = O-phospho-L-threonyl-[protein] + ADP + H(+). In Homo sapiens (Human), this protein is Serine/threonine-protein kinase 35 (STK35).